The sequence spans 942 residues: Chitin synthase 2 (942 aa).

Basic and acidic residues predominate over residues 1-13 (MAYHYSHDSDRRQ). Positions 1-132 (MAYHYSHDSD…PSHTDYSDED (132 aa)) are disordered. Residues 18–33 (YNYPSNYSNPSQYSIP) show a composition bias toward low complexity. Asn23 carries an N-linked (GlcNAc...) asparagine glycan. Over residues 71 to 80 (PQPTASSMTS) the composition is skewed to polar residues. A glycan (N-linked (GlcNAc...) asparagine) is linked at Asn587. Transmembrane regions (helical) follow at residues 590–610 (IFAA…GHGI), 625–645 (FNLL…FFLI), 663–683 (IFQV…VCSL), and 696–716 (FCIF…GWTV). The N-linked (GlcNAc...) asparagine glycan is linked to Asn736. Transmembrane regions (helical) follow at residues 739–759 (FVQL…SSLL) and 770–790 (FVQY…YAMC). N-linked (GlcNAc...) asparagine glycosylation occurs at Asn803. 2 helical membrane-spanning segments follow: residues 873-893 (VVLL…SSTF) and 916-936 (IFYA…LYLI).

It belongs to the chitin synthase family. Class III subfamily.

The protein resides in the cell membrane. It catalyses the reaction [(1-&gt;4)-N-acetyl-beta-D-glucosaminyl](n) + UDP-N-acetyl-alpha-D-glucosamine = [(1-&gt;4)-N-acetyl-beta-D-glucosaminyl](n+1) + UDP + H(+). In terms of biological role, polymerizes chitin, a structural polymer of the cell wall and septum, by transferring the sugar moiety of UDP-GlcNAc to the non-reducing end of the growing chitin polymer. The sequence is that of Chitin synthase 2 from Cryptococcus neoformans var. grubii serotype A (strain H99 / ATCC 208821 / CBS 10515 / FGSC 9487) (Filobasidiella neoformans var. grubii).